The sequence spans 332 residues: Biotin synthase (332 aa).

One can recognise a Radical SAM core domain in the interval 53 to 282 (YFGKKVKLNM…TKEIRISGGR (230 aa)). Residues Cys-71, Cys-75, and Cys-78 each coordinate [4Fe-4S] cluster. The [2Fe-2S] cluster site is built by Cys-115, Cys-147, Cys-207, and Arg-277.

The protein belongs to the radical SAM superfamily. Biotin synthase family. Homodimer. Requires [4Fe-4S] cluster as cofactor. [2Fe-2S] cluster is required as a cofactor.

The enzyme catalyses (4R,5S)-dethiobiotin + (sulfur carrier)-SH + 2 reduced [2Fe-2S]-[ferredoxin] + 2 S-adenosyl-L-methionine = (sulfur carrier)-H + biotin + 2 5'-deoxyadenosine + 2 L-methionine + 2 oxidized [2Fe-2S]-[ferredoxin]. It participates in cofactor biosynthesis; biotin biosynthesis; biotin from 7,8-diaminononanoate: step 2/2. Functionally, catalyzes the conversion of dethiobiotin (DTB) to biotin by the insertion of a sulfur atom into dethiobiotin via a radical-based mechanism. The sequence is that of Biotin synthase from Bacillus anthracis.